Here is a 164-residue protein sequence, read N- to C-terminus: UPF0114 protein YqhA (164 aa).

A run of 3 helical transmembrane segments spans residues 10–32 (YASR…ALAL), 53–75 (LILV…MVMF), and 136–155 (LMWY…VMGY).

This sequence belongs to the UPF0114 family.

The protein resides in the cell membrane. The protein is UPF0114 protein YqhA of Shigella flexneri.